We begin with the raw amino-acid sequence, 2731 residues long: Teneurin-1 (2731 aa).

Residues 1–72 are disordered; the sequence is MEQTDCKPYQ…KRKDVEKSTQ (72 aa). Residues 1-318 enclose the Teneurin N-terminal domain; that stretch reads MEQTDCKPYQ…KPYRCCNWKC (318 aa). The Cytoplasmic segment spans residues 1-324; the sequence is MEQTDCKPYQ…NWKCTALSAT (324 aa). The span at 44-55 shows a compositional bias: basic and acidic residues; sequence ETLHEYNQELRR. The short motif at 62 to 65 is the Nuclear localization signal (NLS) element; sequence RKRK. Ser105 carries the phosphoserine modification. Thr109 is subject to Phosphothreonine. Ser116 is subject to Phosphoserine. The interval 175 to 241 is disordered; that stretch reads DSAQDMQSSP…PAPPTSTQDS (67 aa). Positions 178–189 are enriched in polar residues; that stretch reads QDMQSSPHNQFT. The segment covering 192–201 has biased composition (pro residues); it reads PLPPPPPPPH. Over residues 214–224 the composition is skewed to polar residues; that stretch reads DSLQRRSMTTR. The Required for interaction with SORBS1 (Ten-1 ICD form) motif lies at 290-297; the sequence is PPPRPLPR. The helical transmembrane segment at 325–345 threads the bilayer; sequence AITVTLALLLAYVIAVHLFGL. Over 346-2731 the chain is Extracellular; sequence TWQLQPVGQI…FMRQSEIGRR (2386 aa). The N-linked (GlcNAc...) asparagine glycan is linked to Asn432. EGF-like domains follow at residues 527–558, 559–590, 591–623, 624–656, 657–690, 691–720, 721–752, and 760–795; these read IMDD…PDCA, RDSC…ECDV, PEEQ…EICE, EEDC…NCET, PLPI…SDCS, TELC…GPTC, EERS…DHCT, and VRDG…TGCN. 22 disulfide bridges follow: Cys531–Cys541, Cys535–Cys546, Cys548–Cys557, Cys566–Cys577, Cys579–Cys588, Cys595–Cys606, Cys600–Cys611, Cys613–Cys622, Cys627–Cys638, Cys632–Cys643, Cys645–Cys654, Cys665–Cys678, Cys680–Cys689, Cys694–Cys704, Cys698–Cys709, Cys711–Cys720, Cys725–Cys735, Cys729–Cys740, Cys742–Cys751, Cys764–Cys774, Cys768–Cys783, and Cys785–Cys794. N-linked (GlcNAc...) asparagine glycosylation is found at Asn904 and Asn1083. NHL repeat units follow at residues 1193–1218, 1298–1342, 1357–1408, 1420–1464, and 1487–1530; these read LFAP…VRRI, SHCG…NAVI, LSCD…IAGR, FLVS…VTTN, and CFSG…ISKN. The YD 1 repeat unit spans residues 1540 to 1559; that stretch reads YEIASPADQELYQFTVNGTH. N-linked (GlcNAc...) asparagine glycans are attached at residues Asn1556 and Asn1573. 4 YD repeats span residues 1576–1596, 1614–1638, 1639–1660, and 1661–1681; these read YNAE…VHIR, YWLT…ALMT, YPGN…TVYE, and YDPE…SSFH. 6 N-linked (GlcNAc...) asparagine glycosylation sites follow: Asn1669, Asn1705, Asn1743, Asn1763, Asn1787, and Asn1848. 11 YD repeats span residues 1851 to 1870, 1871 to 1891, 1892 to 1910, 1911 to 1931, 1939 to 1955, 1956 to 1975, 1976 to 1995, 1998 to 2018, 2021 to 2041, 2091 to 2111, and 2119 to 2139; these read YSPS…EKME, YDQS…WSYT, YLEK…YIFE, YDQS…HSLQ, YRNI…FIQD, YSRD…RRVL, YKYT…TQVT, YEES…FICT, YRQT…EGLV, YDLN…FNAN, and YEIL…MGRM. N-linked (GlcNAc...) asparagine glycosylation occurs at Asn2151. YD repeat units lie at residues 2159 to 2179, 2180 to 2200, 2202 to 2222, 2234 to 2254, and 2256 to 2276; these read YDAD…WRYS, YDLN…LTPL, YDLR…DEDG, YNSN…TVQY, and YDGL…LQFF. Residue Asn2291 is glycosylated (N-linked (GlcNAc...) asparagine). YD repeat units follow at residues 2302 to 2319 and 2320 to 2343; these read YDLQ…GEEY and YVAC…IKEI. Residue Ser2586 is modified to Phosphoserine. Asn2608 carries an N-linked (GlcNAc...) asparagine glycan.

Belongs to the tenascin family. Teneurin subfamily. As to quaternary structure, homodimer; disulfide-linked. Heterodimer with either TENM2 or TENM3. May also form heterodimer with TENM4. Ten-1 ICD interacts with SORBS1 (via third SH3 domain). Interacts with MBD1 isoform 2. Ten-1 ICD interacts with HINT1. Once secreted, may also be cleaved to give rise to the TCAP-1 form. Post-translationally, derives from the plasma membrane form by proteolytic processing. Further proteolytic cleavage may generate 11.9 and 4.7 kDa bioactive peptides. As to expression, isoform 1 and isoform 2 are expressed in the brain. Isoform 2 is expressed in the granular layer of the dentate gyrus and the pyramidal layer (Py) of the CA1, CA2 and CA3 of the hippocampus (at protein level). Expressed in the cortex, thalamus, CA1, CA2, CA3, dentate gyrus and granular layer of the hippocampus. Weakly expressed in kidney, testis and lung.

It localises to the cell membrane. The protein resides in the cytoplasm. The protein localises to the secreted. It is found in the nucleus. Its subcellular location is the nucleus speckle. It localises to the nucleus matrix. The protein resides in the cytoskeleton. Involved in neural development, regulating the establishment of proper connectivity within the nervous system. May function as a cellular signal transducer. In terms of biological role, plays a role in the regulation of neuroplasticity in the limbic system. Mediates a rapid reorganization of actin- and tubulin-based cytoskeleton elements with an increase in dendritic arborization and spine density formation of neurons in the hippocampus and amygdala. Induces BDNF transcription inhibition in neurons. Activates the mitogen-activated protein (MAP) kinase 2 (MEK2) and extracellular signal-regulated kinase (ERK) cascade. Also acts as a bioactive neuroprotective peptide on limbic neurons of the brain and regulates stress-induced behavior: attenuates alkalosis-associated necrotic cell death and the effects of corticotropin-releasing factor (CRF) on c-fos/FOS induction and on the reinstatement of cocaine seeking. Functionally, induces gene transcription activation. This chain is Teneurin-1 (Tenm1), found in Mus musculus (Mouse).